The following is a 428-amino-acid chain: Glycine reductase complex component B subunits alpha and beta (428 aa).

Cysteine 242 (schiff-base intermediate with substrate; via pyruvic acid) is an active-site residue. At cysteine 242 the chain carries Pyruvic acid (Cys).

In terms of assembly, heterohexamer of two alpha, two beta and two gamma subunits. Component of the glycine reductase complex, together with components A and C. PB is substrate specific. In terms of processing, the peptide chain is cleaved into beta and alpha chains, and the alpha chain N-terminal cysteine is deaminated and oxidized to form a reactive pyruvoyl group.

It catalyses the reaction acetyl phosphate + [thioredoxin]-disulfide + NH4(+) + H2O = [thioredoxin]-dithiol + glycine + phosphate + H(+). In the first step of glycine reductase, the substrate is bound to component PB via a Schiff base intermediate. Then the PB-activated substrate is nucleophilically attacked by the selenol anion of component PA to transform it to a carboxymethylated selenoether and the respective amine. By action of component PC, acetyl phosphate is formed, leaving component PA in its oxidized state. Finally component PA becomes reduced by the thioredoxin system to start a new catalytic cycle of reductive deamination. The sequence is that of Glycine reductase complex component B subunits alpha and beta (grdE) from Peptoclostridium acidaminophilum (Eubacterium acidaminophilum).